Consider the following 75-residue polypeptide: Acyl carrier protein (75 aa).

The Carrier domain occupies 1–75; that stretch reads MIFEKVRDII…DVVEYLSNLE (75 aa). Position 35 is an O-(pantetheine 4'-phosphoryl)serine (Ser35).

The protein belongs to the acyl carrier protein (ACP) family. Post-translationally, 4'-phosphopantetheine is transferred from CoA to a specific serine of apo-ACP by AcpS. This modification is essential for activity because fatty acids are bound in thioester linkage to the sulfhydryl of the prosthetic group.

Its subcellular location is the cytoplasm. It participates in lipid metabolism; fatty acid biosynthesis. Carrier of the growing fatty acid chain in fatty acid biosynthesis. This Thermoanaerobacter pseudethanolicus (strain ATCC 33223 / 39E) (Clostridium thermohydrosulfuricum) protein is Acyl carrier protein.